The primary structure comprises 1029 residues: Beta-galactosidase (1029 aa).

Substrate contacts are provided by Asn-108 and Asp-207. Asp-207 is a Na(+) binding site. Glu-422, His-424, and Glu-467 together coordinate Mg(2+). Substrate-binding positions include Glu-467 and 543–546 (EYAH). Catalysis depends on Glu-467, which acts as the Proton donor. The active-site Nucleophile is the Glu-543. Asn-603 contributes to the Mg(2+) binding site. The Na(+) site is built by Phe-607 and Asn-610. Substrate-binding residues include Asn-610 and Trp-1005.

Belongs to the glycosyl hydrolase 2 family. As to quaternary structure, homotetramer. Requires Mg(2+) as cofactor. The cofactor is Na(+).

The catalysed reaction is Hydrolysis of terminal non-reducing beta-D-galactose residues in beta-D-galactosides.. The polypeptide is Beta-galactosidase (Escherichia coli).